The sequence spans 239 residues: RNA chaperone ProQ (239 aa).

Residues 107 to 177 (KARVQAQRAE…RKPVAKPVQA (71 aa)) are disordered. Over residues 115-137 (AEQRAKKREAENVAAGEKNERPT) the composition is skewed to basic and acidic residues.

The protein belongs to the ProQ family.

The protein resides in the cytoplasm. In terms of biological role, RNA chaperone with significant RNA binding, RNA strand exchange and RNA duplexing activities. May regulate ProP activity through an RNA-based, post-transcriptional mechanism. This Photorhabdus laumondii subsp. laumondii (strain DSM 15139 / CIP 105565 / TT01) (Photorhabdus luminescens subsp. laumondii) protein is RNA chaperone ProQ.